The sequence spans 101 residues: UPF0235 protein MMP1055 (101 aa).

This sequence belongs to the UPF0235 family.

In Methanococcus maripaludis (strain DSM 14266 / JCM 13030 / NBRC 101832 / S2 / LL), this protein is UPF0235 protein MMP1055.